Reading from the N-terminus, the 86-residue chain is Small nuclear ribonucleoprotein F (86 aa).

Positions 14 to 86 (NPKPFLKGLV…NVLYIRELPN (73 aa)) constitute a Sm domain.

This sequence belongs to the snRNP Sm proteins family. SmF/LSm6 subfamily. In terms of assembly, component of the Sm core complex, present in spliceosomal snRNP U1, U2, U4/U6 and U5. The core complex contains SMB1, SMD1, SMD2, SMD3, SME1, SMX3 and SMX2 (Sm proteins B, D1, D2, D3, E, F and G, respectively), and is probably a heptameric ring structure. SMX3 specifically interacts with SME1. Belongs to the CWC complex (or CEF1-associated complex), a spliceosome sub-complex reminiscent of a late-stage spliceosome composed of the U2, U5 and U6 snRNAs and at least BUD13, BUD31, BRR2, CDC40, CEF1, CLF1, CUS1, CWC2, CWC15, CWC21, CWC22, CWC23, CWC24, CWC25, CWC27, ECM2, HSH155, IST3, ISY1, LEA1, MSL1, NTC20, PRP8, PRP9, PRP11, PRP19, PRP21, PRP22, PRP45, PRP46, SLU7, SMB1, SMD1, SMD2, SMD3, SMX2, SMX3, SNT309, SNU114, SPP2, SYF1, SYF2, RSE1 and YJU2. Component of the U4/U6-U5 tri-snRNP complex composed of the U4, U6 and U5 snRNAs and at least PRP3, PRP4, PRP6, PRP8, PRP18, PRP31, PRP38, SNU13, SNU23, SNU66, SNU114, SPP381, SMB1, SMD1, SMD2, SMD3, SMX2, SMX3, LSM2, LSM3, LSM4, LSM5, LSM6, LSM7, LSM8, BRR2 and DIB1.

The protein localises to the nucleus. It localises to the cytoplasm. Plays a role in pre-mRNA splicing as a core component of the spliceosomal U1, U2, U4 and U5 small nuclear ribonucleoproteins (snRNPs), the building blocks of the spliceosome. In Saccharomyces cerevisiae (strain ATCC 204508 / S288c) (Baker's yeast), this protein is Small nuclear ribonucleoprotein F (SMX3).